Reading from the N-terminus, the 154-residue chain is Endoribonuclease YbeY (154 aa).

Zn(2+) is bound by residues His116, His120, and His126.

It belongs to the endoribonuclease YbeY family. It depends on Zn(2+) as a cofactor.

It localises to the cytoplasm. In terms of biological role, single strand-specific metallo-endoribonuclease involved in late-stage 70S ribosome quality control and in maturation of the 3' terminus of the 16S rRNA. The polypeptide is Endoribonuclease YbeY (Chromohalobacter salexigens (strain ATCC BAA-138 / DSM 3043 / CIP 106854 / NCIMB 13768 / 1H11)).